The primary structure comprises 402 residues: Dihydrolipoyllysine-residue acetyltransferase component of pyruvate dehydrogenase complex (402 aa).

The Lipoyl-binding domain maps to Met-1 to Lys-69. Lys-35 carries the post-translational modification N6-lipoyllysine. One can recognise a Peripheral subunit-binding (PSBD) domain in the interval His-109 to Ile-146. The active site involves His-375.

It belongs to the 2-oxoacid dehydrogenase family. In terms of assembly, forms a 24-polypeptide structural core with octahedral symmetry. It depends on (R)-lipoate as a cofactor.

The catalysed reaction is N(6)-[(R)-dihydrolipoyl]-L-lysyl-[protein] + acetyl-CoA = N(6)-[(R)-S(8)-acetyldihydrolipoyl]-L-lysyl-[protein] + CoA. In terms of biological role, the pyruvate dehydrogenase complex catalyzes the overall conversion of pyruvate to acetyl-CoA and CO(2). It contains multiple copies of three enzymatic components: pyruvate dehydrogenase (E1), dihydrolipoamide acetyltransferase (E2) and lipoamide dehydrogenase (E3). The polypeptide is Dihydrolipoyllysine-residue acetyltransferase component of pyruvate dehydrogenase complex (aceF) (Buchnera aphidicola subsp. Schizaphis graminum (strain Sg)).